The sequence spans 238 residues: COMM domain-containing protein 10 homolog Vlet (238 aa).

Low complexity predominate over residues Ala-43–Glu-77. The interval Ala-43–Tyr-78 is disordered. Residues Val-161–Leu-225 enclose the COMM domain.

The protein belongs to the COMM domain-containing protein 10 family. Component of the commander complex consisting of the CCC subcomplex and the retriever subcomplex. Component of the CCC subcomplex. Interacts with Smn; along with Sbat and Hez may form an accessory subcomplex involved in SMN complex function.

Its function is as follows. Scaffold protein in the commander complex that is essential for endosomal recycling of transmembrane cargos; the commander complex is composed of the CCC subcomplex and the retriever subcomplex. May modulate activity of cullin-RING E3 ubiquitin ligase (CRL) complexes. May down-regulate activation of NF-kappa-B. May have an accessory function in the survival motor neuron (SMN) complex. Required for neuromuscular function and organismal viability. In Drosophila melanogaster (Fruit fly), this protein is COMM domain-containing protein 10 homolog Vlet.